Reading from the N-terminus, the 213-residue chain is MKSLQALFGGTFDPVHYGHLKPVETLANLIGLTRVTIIPNNVPPHRPQPEANSMQRKHMLELAIADKPLFTLDERELKRNAPSYTAQTLKEWRQEQGPDVPLAFIIGQDSLLTFPTWYEYETILDNAHLIVCRRPGYPLEMAQPQYQQWLEDHLTHNPEDLHLQPAGKIYLAETPWFNISATIIRERLQNGESCEDLLPEPVLTYINQQGLYR.

This sequence belongs to the NadD family.

The catalysed reaction is nicotinate beta-D-ribonucleotide + ATP + H(+) = deamido-NAD(+) + diphosphate. Its pathway is cofactor biosynthesis; NAD(+) biosynthesis; deamido-NAD(+) from nicotinate D-ribonucleotide: step 1/1. Functionally, catalyzes the reversible adenylation of nicotinate mononucleotide (NaMN) to nicotinic acid adenine dinucleotide (NaAD). This Escherichia coli O45:K1 (strain S88 / ExPEC) protein is Probable nicotinate-nucleotide adenylyltransferase.